The following is a 429-amino-acid chain: TNF receptor-associated factor family protein DDB_G0267744 (429 aa).

The RING-type; degenerate zinc-finger motif lies at 22-60 (CVICSHLQVDIYQCVEGHFACKNCFLKMIELKKQCMTCR). TRAF-type zinc fingers lie at residues 151-203 (HHLK…GEFN) and 204-265 (NHQD…SNSE).

This sequence belongs to the TNF receptor-associated factor family.

It is found in the cytoplasm. Probable adapter protein and signal transducer that links members of the tumor necrosis factor receptor family to different signaling pathways by association with the receptor cytoplasmic domain and kinases. The polypeptide is TNF receptor-associated factor family protein DDB_G0267744 (Dictyostelium discoideum (Social amoeba)).